The following is a 519-amino-acid chain: Exodeoxyribonuclease 7 large subunit (519 aa).

Residues 500–519 form a disordered region; the sequence is VGRGKTRKPKEEPPAQGSLL.

The protein belongs to the XseA family. In terms of assembly, heterooligomer composed of large and small subunits.

The protein resides in the cytoplasm. It catalyses the reaction Exonucleolytic cleavage in either 5'- to 3'- or 3'- to 5'-direction to yield nucleoside 5'-phosphates.. Bidirectionally degrades single-stranded DNA into large acid-insoluble oligonucleotides, which are then degraded further into small acid-soluble oligonucleotides. This is Exodeoxyribonuclease 7 large subunit from Cereibacter sphaeroides (strain KD131 / KCTC 12085) (Rhodobacter sphaeroides).